A 195-amino-acid chain; its full sequence is N-terminal acetyltransferase B complex catalytic subunit NAT3 (195 aa).

The 171-residue stretch at 2 to 172 folds into the N-acetyltransferase domain; that stretch reads TTIQPFEPVD…DAFDMRKAMA (171 aa).

Belongs to the acetyltransferase family. GNAT subfamily. As to quaternary structure, component of the N-terminal acetyltransferase B (NatB) complex, which is composed of NAT3 and MDM20.

The protein resides in the cytoplasm. The enzyme catalyses N-terminal L-methionyl-L-asparaginyl-[protein] + acetyl-CoA = N-terminal N(alpha)-acetyl-L-methionyl-L-asparaginyl-[protein] + CoA + H(+). It carries out the reaction N-terminal L-methionyl-L-glutaminyl-[protein] + acetyl-CoA = N-terminal N(alpha)-acetyl-L-methionyl-L-glutaminyl-[protein] + CoA + H(+). The catalysed reaction is N-terminal L-methionyl-L-aspartyl-[protein] + acetyl-CoA = N-terminal N(alpha)-acetyl-L-methionyl-L-aspartyl-[protein] + CoA + H(+). It catalyses the reaction N-terminal L-methionyl-L-glutamyl-[protein] + acetyl-CoA = N-terminal N(alpha)-acetyl-L-methionyl-L-glutamyl-[protein] + CoA + H(+). Catalytic subunit of the NatB N-terminal acetyltransferase, which catalyzes acetylation of the amino-terminal methionine residues of all proteins beginning with Met-Asp or Met-Glu and of some proteins beginning with Met-Asn, Met-Gln or Met-Met. NatB acetylates TPM1 protein and regulates tropomyocin-actin interactions, it is presumed to N-acetylate 15% of all yeast proteins. The sequence is that of N-terminal acetyltransferase B complex catalytic subunit NAT3 from Saccharomyces cerevisiae (strain ATCC 204508 / S288c) (Baker's yeast).